The following is a 294-amino-acid chain: Tyrosine recombinase XerC (294 aa).

The Core-binding (CB) domain occupies 1-85 (MSRLVEDFFA…ACRGFYTWLV (85 aa)). One can recognise a Tyr recombinase domain in the interval 106 to 283 (KLPRILDADE…DFQYLSKVYD (178 aa)). Residues arginine 145, lysine 169, histidine 235, arginine 238, and histidine 261 contribute to the active site. The active-site O-(3'-phospho-DNA)-tyrosine intermediate is the tyrosine 270.

The protein belongs to the 'phage' integrase family. XerC subfamily. Forms a cyclic heterotetrameric complex composed of two molecules of XerC and two molecules of XerD.

It is found in the cytoplasm. In terms of biological role, site-specific tyrosine recombinase, which acts by catalyzing the cutting and rejoining of the recombining DNA molecules. The XerC-XerD complex is essential to convert dimers of the bacterial chromosome into monomers to permit their segregation at cell division. It also contributes to the segregational stability of plasmids. This is Tyrosine recombinase XerC from Xylella fastidiosa (strain M23).